We begin with the raw amino-acid sequence, 68 residues long: Beta-toxin Im-2 (68 aa).

The 67-residue stretch at 1 to 67 (KDGYPMVRAG…VWTYEKNTCK (67 aa)) folds into the LCN-type CS-alpha/beta domain. Disulfide bonds link cysteine 15–cysteine 66, cysteine 19–cysteine 40, cysteine 26–cysteine 47, and cysteine 30–cysteine 49.

The protein belongs to the long (4 C-C) scorpion toxin superfamily. Sodium channel inhibitor family. Beta subfamily. Expressed by the venom gland.

Its subcellular location is the secreted. Beta toxins bind voltage-independently at site-4 of sodium channels (Nav) and shift the voltage of activation toward more negative potentials thereby affecting sodium channel activation and promoting spontaneous and repetitive firing. Is toxic to both insect and mammals. Induces paralysis in Acheta domestica crickets, but does not induce death, whereas intracerebroventricular injection into mice causes immediate death (at a dose of 0.05 ug/g). This chain is Beta-toxin Im-2, found in Isometrus maculatus (Lesser brown scorpion).